Consider the following 590-residue polypeptide: Negative elongation factor D (590 aa).

The interval 15 to 43 (FGSAAEWGDEADGGQQEDDYGEGEDDAEV) is disordered. Residues 21-43 (WGDEADGGQQEDDYGEGEDDAEV) show a composition bias toward acidic residues.

It belongs to the NELF-D family. In terms of assembly, the NELF complex is composed of NELFA, NELFB, NELFCD and NELFE; NELFA and NELFCD form a stable subcomplex that binds primarily through NELFCD to the N-terminus of NELFB. Binds RNA which may help to stabilize the NELF complex on nucleic acid. In vitro, the NELFA:NELFCD subcomplex binds to ssDNA and ssRNA in a sequence- and structure-dependent manner. Interacts with ARAF1. Interacts with PCF11. Interacts with NELFB. Interacts with KAT8.

The protein resides in the nucleus. Functionally, essential component of the NELF complex, a complex that negatively regulates the elongation of transcription by RNA polymerase II. The NELF complex, which acts via an association with the DSIF complex and causes transcriptional pausing, is counteracted by the P-TEFb kinase complex. The sequence is that of Negative elongation factor D (NELFCD) from Sus scrofa (Pig).